We begin with the raw amino-acid sequence, 326 residues long: N-acetyl-gamma-glutamyl-phosphate reductase (326 aa).

Cys155 is a catalytic residue.

It belongs to the NAGSA dehydrogenase family. Type 1 subfamily.

Its subcellular location is the cytoplasm. The catalysed reaction is N-acetyl-L-glutamate 5-semialdehyde + phosphate + NADP(+) = N-acetyl-L-glutamyl 5-phosphate + NADPH + H(+). It functions in the pathway amino-acid biosynthesis; L-arginine biosynthesis; N(2)-acetyl-L-ornithine from L-glutamate: step 3/4. Its function is as follows. Catalyzes the NADPH-dependent reduction of N-acetyl-5-glutamyl phosphate to yield N-acetyl-L-glutamate 5-semialdehyde. The polypeptide is N-acetyl-gamma-glutamyl-phosphate reductase (Shewanella baltica (strain OS223)).